The following is a 574-amino-acid chain: Interactor of HORMAD1 protein 1 (574 aa).

A disordered region spans residues 113–133 (GLSKQFEEKKRRATDQSDSET). Residues 117-127 (QFEEKKRRATD) show a composition bias toward basic and acidic residues. Positions 217 to 240 (MEMKSTLKNLEVLVVEQTKNLQQF) form a coiled coil. Disordered stretches follow at residues 267-324 (GHLK…GVWD), 372-393 (FSNL…GASQ), and 426-457 (TEQK…DRKQ). Low complexity predominate over residues 272-284 (STSQTSPSLTQSL). The segment covering 372-381 (FSNLPSQRAG) has biased composition (polar residues). A compositionally biased stretch (basic residues) spans 431 to 449 (RPCRKRRRGKKQQPQRSKR). Phosphoserine occurs at positions 476, 569, and 570.

As to quaternary structure, part of the MCD recombinosome complex, at least composed of IHO1, REC114 and MEI4. Interacts with REC114. Interacts with MEI4. Interacts with HORMAD1. Interacts with ANKRD31. As to expression, detected in spermatocytes and testis (at protein level).

It is found in the chromosome. In terms of biological role, required for DNA double-strand breaks (DSBs) formation in unsynapsed regions during meiotic recombination. Probably acts by forming a complex with MEI4 and REC114, which activates DSBs formation in unsynapsed regions, an essential step to ensure completion of synapsis. Not required for HORMAD1 functions in pairing-independent synaptonemal complex formation, ATR recruitment to unsynapsed axes, meiotic silencing of unsynapsed chromatin (MSUC) or meiotic surveillance. The sequence is that of Interactor of HORMAD1 protein 1 from Mus musculus (Mouse).